A 647-amino-acid polypeptide reads, in one-letter code: Phosphatidylinositol polyphosphate 5-phosphatase type IV (647 aa).

Disordered regions lie at residues 1 to 80 (MPSK…QPPI), 101 to 131 (RGSQ…PAYS), and 177 to 196 (HRDA…HASH). Repeat 1 spans residues 52-55 (PMPP). A 3 X 4 AA repeats of P-X-X-P region spans residues 52 to 243 (PMPPFSIPAK…AHSNLGPSRP (192 aa)). Polar residues predominate over residues 60–75 (AKTSNQNPQTKANLIT). The stretch at 76-79 (PQPP) is repeat 2. Ser103 carries the post-translational modification Phosphoserine. The span at 120 to 129 (LQDSVAQSPA) shows a compositional bias: polar residues. Thr197 carries the phosphothreonine modification. Residues 240 to 243 (PSRP) form repeat 3. Phosphoserine occurs at positions 245 and 259. The residue at position 644 (Cys644) is a Cysteine methyl ester. Cys644 carries S-farnesyl cysteine lipidation. Residues 645–647 (TVS) constitute a propeptide, removed in mature form.

It belongs to the inositol polyphosphate 5-phosphatase family. Interacts (when prenylated) with PDE6D; this is important for normal location in cilia. As to expression, highly expressed in testis, in pachytene and diplotene spermatocytes, but not in more mature elongating spermatids. Detected in neurons throughout the brain.

The protein resides in the cytoplasm. Its subcellular location is the cytoskeleton. It localises to the cilium axoneme. It is found in the golgi apparatus. The protein localises to the golgi stack membrane. The protein resides in the cell projection. Its subcellular location is the ruffle. It localises to the cell membrane. It is found in the nucleus. It carries out the reaction a 1,2-diacyl-sn-glycero-3-phospho-(1D-myo-inositol-4,5-bisphosphate) + H2O = a 1,2-diacyl-sn-glycero-3-phospho-(1D-myo-inositol 4-phosphate) + phosphate. The enzyme catalyses a 1,2-diacyl-sn-glycero-3-phospho-(1D-myo-inositol-3,4,5-trisphosphate) + H2O = a 1,2-diacyl-sn-glycero-3-phospho-(1D-myo-inositol-3,4-bisphosphate) + phosphate. The catalysed reaction is a 1,2-diacyl-sn-glycero-3-phospho-(1D-myo-inositol-3,5-bisphosphate) + H2O = a 1,2-diacyl-sn-glycero-3-phospho-(1D-myo-inositol-3-phosphate) + phosphate. Phosphatidylinositol (PtdIns) phosphatase that specifically hydrolyzes the 5-phosphate of phosphatidylinositol-3,4,5-trisphosphate (PtdIns(3,4,5)P3), phosphatidylinositol 4,5-bisphosphate (PtdIns(4,5)P2) and phosphatidylinositol 3,5-bisphosphate (PtdIns(3,5)P2). Specific for lipid substrates, inactive towards water soluble inositol phosphates. Specific for lipid substrates, inactive towards water soluble inositol phosphates. Plays an essential role in the primary cilium by controlling ciliary growth and phosphoinositide 3-kinase (PI3K) signaling and stability. In Mus musculus (Mouse), this protein is Phosphatidylinositol polyphosphate 5-phosphatase type IV (Inpp5e).